The following is a 95-amino-acid chain: Integration host factor subunit beta (95 aa).

This sequence belongs to the bacterial histone-like protein family. Heterodimer of an alpha and a beta chain.

Functionally, this protein is one of the two subunits of integration host factor, a specific DNA-binding protein that functions in genetic recombination as well as in transcriptional and translational control. The protein is Integration host factor subunit beta of Shewanella loihica (strain ATCC BAA-1088 / PV-4).